A 717-amino-acid chain; its full sequence is Ribosomal RNA large subunit methyltransferase K/L (717 aa).

In terms of domain architecture, THUMP spans 45-142 (GAYRICLGSR…DKRSGVQTVQ (98 aa)).

This sequence belongs to the methyltransferase superfamily. RlmKL family.

The protein localises to the cytoplasm. It carries out the reaction guanosine(2445) in 23S rRNA + S-adenosyl-L-methionine = N(2)-methylguanosine(2445) in 23S rRNA + S-adenosyl-L-homocysteine + H(+). The catalysed reaction is guanosine(2069) in 23S rRNA + S-adenosyl-L-methionine = N(2)-methylguanosine(2069) in 23S rRNA + S-adenosyl-L-homocysteine + H(+). Functionally, specifically methylates the guanine in position 2445 (m2G2445) and the guanine in position 2069 (m7G2069) of 23S rRNA. The chain is Ribosomal RNA large subunit methyltransferase K/L from Hahella chejuensis (strain KCTC 2396).